Reading from the N-terminus, the 250-residue chain is 5-oxoprolinase subunit A (250 aa).

It belongs to the LamB/PxpA family. In terms of assembly, forms a complex composed of PxpA, PxpB and PxpC.

It carries out the reaction 5-oxo-L-proline + ATP + 2 H2O = L-glutamate + ADP + phosphate + H(+). Catalyzes the cleavage of 5-oxoproline to form L-glutamate coupled to the hydrolysis of ATP to ADP and inorganic phosphate. The polypeptide is 5-oxoprolinase subunit A (Klebsiella pneumoniae (strain 342)).